A 313-amino-acid chain; its full sequence is Protoheme IX farnesyltransferase (313 aa).

The next 8 membrane-spanning stretches (helical) occupy residues 32-52 (VMSLVVFTALVGMLLAPGDFH), 53-73 (PVLAITAMLCIAVGGGAAGAL), 120-140 (ILVNWVAGALLAFTIFFYVVI), 153-173 (IVIGGAAGALPPVVAWAAVTG), 180-200 (LLLFAIIFFWTPPHFWALALF), 226-246 (ILLYTIVLVAVAAAPWPLGYF), 248-268 (AIYGVASLALGGWMLVLALRV), and 284-304 (LFKFSILYLFALFSILLLEVV).

It belongs to the UbiA prenyltransferase family. Protoheme IX farnesyltransferase subfamily.

The protein resides in the cell inner membrane. It catalyses the reaction heme b + (2E,6E)-farnesyl diphosphate + H2O = Fe(II)-heme o + diphosphate. Its pathway is porphyrin-containing compound metabolism; heme O biosynthesis; heme O from protoheme: step 1/1. Its function is as follows. Converts heme B (protoheme IX) to heme O by substitution of the vinyl group on carbon 2 of heme B porphyrin ring with a hydroxyethyl farnesyl side group. The protein is Protoheme IX farnesyltransferase of Rhodopseudomonas palustris (strain HaA2).